The sequence spans 165 residues: Cytochrome c-type biogenesis protein CcmE (165 aa).

Topologically, residues 1-29 are cytoplasmic; it reads MSATAEQNARNPKGKGGFARTVSQRKRKR. The chain crosses the membrane as a helical; Signal-anchor for type II membrane protein span at residues 30–50; that stretch reads LFLIGGALAVLAVAVGLMLTA. Residues 51–165 lie on the Periplasmic side of the membrane; sequence FNQDIRFFRT…LKKKGVWEGK (115 aa). 2 residues coordinate heme: H143 and Y147.

The protein belongs to the CcmE/CycJ family.

Its subcellular location is the cell inner membrane. Heme chaperone required for the biogenesis of c-type cytochromes. Transiently binds heme delivered by CcmC and transfers the heme to apo-cytochromes in a process facilitated by CcmF and CcmH. This is Cytochrome c-type biogenesis protein CcmE from Brucella canis (strain ATCC 23365 / NCTC 10854 / RM-666).